Consider the following 502-residue polypeptide: Arginine-specific demethylase JMJ22 (502 aa).

Positions Lys-15 to Gly-45 are disordered. The span at His-24 to Lys-35 shows a compositional bias: basic and acidic residues. The F-box domain maps to Leu-80–Leu-126. A JmjC domain is found at Glu-279–Asn-439. Positions 324, 326, and 407 each coordinate Fe cation.

It belongs to the JARID1 histone demethylase family. Fe(2+) is required as a cofactor. Expressed in inflorescences, roots and siliques, and, at low levels, in leaves and stems.

It localises to the nucleus. It catalyses the reaction N(omega),N(omega)-dimethyl-L-arginyl-[protein] + 2-oxoglutarate + O2 = N(omega)-methyl-L-arginyl-[protein] + formaldehyde + succinate + CO2. Its function is as follows. Histone demethylase that demethylates 'Arg-3' (H4R3me) of histone H4 with a specific activity for H4R3me2. Involved in the positive regulation of gene expression. Together with JMJ20, positively regulates seed germination by promoting the removal of repressive histone arginine methylations (e.g. H4R3me2) at GA3ox1 and GA3ox2 to trigger gibberellic acid (GA) biosynthesis. The chain is Arginine-specific demethylase JMJ22 from Arabidopsis thaliana (Mouse-ear cress).